Here is a 391-residue protein sequence, read N- to C-terminus: MASIEEIRQAQRADGPATILAIGTATPPNAIYQADYPDYYFRVTKSEHMTELKEKFRRMCDKSMIKKRYMYLTEEILKENPNLCEYMGSSLDTRQDMVVSEVPRLGKEAAVKAIKEWGQPKSKITHVIMCTTSGVDMPGADYQLTKLLGLRPSVRRFMLYQQGCFAGGTVLRLAKDLAENNKGARVLVVCSEITAICFRGPTEAALDSMVGQALFGDGAGALIVGSDPDLSIERPLFQMAWAGQTLLPDSEGAIDGHLREVGLTFHLLKDVPGIISKNITNALEEAFSPIGVSDWNNLFWIAHPGGPAILDQVEAKLGLKEEKLAATRNVLSDFGNMSSACVLFILDEMRKKSLRDGATTTGEGLDWGVLFGFGPGLTVETVVLHSVPLNC.

Residue C164 is part of the active site.

The protein belongs to the thiolase-like superfamily. Chalcone/stilbene synthases family.

It catalyses the reaction (E)-4-coumaroyl-CoA + 3 malonyl-CoA + 3 H(+) = 2',4,4',6'-tetrahydroxychalcone + 3 CO2 + 4 CoA. Its pathway is secondary metabolite biosynthesis; flavonoid biosynthesis. Functionally, the primary product of this enzyme is 4,2',4',6'-tetrahydroxychalcone (also termed naringenin-chalcone or chalcone) which can under specific conditions spontaneously isomerize into naringenin. The protein is Chalcone synthase (CHS) of Dianthus monspessulanus.